We begin with the raw amino-acid sequence, 1032 residues long: Contactin-1a (1032 aa).

Positions 1–31 (MIPEAFQPRAMKHTTTVLMLALSSRFWSVCA) are cleaved as a signal peptide. Ig-like C2-type domains are found at residues 46 to 139 (PVFE…ARVQ), 144 to 231 (DMFS…KSVF), 249 to 335 (PADI…THLY), 340 to 417 (PDWL…AELR), 423 to 510 (PSFQ…GSLS), and 515 to 612 (TKIT…AELV). 2 disulfides stabilise this stretch: C70-C122 and C166-C219. N-linked (GlcNAc...) asparagine glycans are attached at residues N119, N216, and N266. Intrachain disulfides connect C271–C319, C361–C401, and C446–C494. N-linked (GlcNAc...) asparagine glycosylation is found at N455, N467, N483, and N504. C536 and C596 form a disulfide bridge. A glycan (N-linked (GlcNAc...) asparagine) is linked at N604. Fibronectin type-III domains lie at 619-718 (PPGG…TREA), 723-820 (APSD…SAQD), 825-918 (APII…TKKS), and 920-1015 (PSRP…APAP). Residues 699-729 (NTLGTGPPSEPSPKTTTREARPIVAPSDIGG) form a disordered region. A glycan (N-linked (GlcNAc...) asparagine) is linked at N879. The interval 907 to 926 (ASQRNRIYTKKSPPSRPPKI) is disordered. N-linked (GlcNAc...) asparagine glycosylation is present at N950. G1010 is lipidated: GPI-anchor amidated glycine. A propeptide spans 1011–1032 (SAPAPALASALLLLPLLWTLML) (removed in mature form).

This sequence belongs to the immunoglobulin superfamily. Contactin family. In terms of tissue distribution, expressed in brain.

It is found in the cell membrane. In terms of biological role, mediates cell surface interactions during nervous system development. The sequence is that of Contactin-1a (cntn1a) from Danio rerio (Zebrafish).